The primary structure comprises 314 residues: MFDPKKFVEEAIEELRREIGDRKAIIAVSGGVDSTTAAVLTHRAIGSHLVCVFVDHGFMRKGEPERIRELLEEELGLNLRFVEAAEEFFEALRGVTDPEEKRKIIGEKFIEVFERIAEEEEAEVLVQGTIAPDIIESERGIKSHHNVGGLPEKLNLDVVEPLRDLYKDEVREVARYLGIPDEIVERMPFPGPGLAVRVLGEVTPEKVEIVREANAIVEEEVEKAVEEGKMSKPWQAFAALLDCKATGVKGDERDYGWVIAVRIVESIDAMIADVPEVPWEVLRNIQDRITSEVPEVTRVLFDITPKPPATIEFE.

The 185-residue stretch at Phe-2–Arg-186 folds into the GMPS ATP-PPase domain. Ser-29–Thr-35 provides a ligand contact to ATP.

In terms of assembly, heterodimer composed of a glutamine amidotransferase subunit (A) and a GMP-binding subunit (B).

It carries out the reaction XMP + L-glutamine + ATP + H2O = GMP + L-glutamate + AMP + diphosphate + 2 H(+). It functions in the pathway purine metabolism; GMP biosynthesis; GMP from XMP (L-Gln route): step 1/1. Its function is as follows. Catalyzes the synthesis of GMP from XMP. The protein is GMP synthase [glutamine-hydrolyzing] subunit B (guaAB) of Methanopyrus kandleri (strain AV19 / DSM 6324 / JCM 9639 / NBRC 100938).